Consider the following 165-residue polypeptide: Destrin (165 aa).

Ala-2 carries the N-acetylalanine modification. Ser-3 carries the phosphoserine modification. The region spanning 4-153 (GVQVADEVCR…NRTCIAEKLG (150 aa)) is the ADF-H domain. At Lys-19 the chain carries N6-acetyllysine. Positions 30–34 (KKRKK) match the Nuclear localization signal motif.

Belongs to the actin-binding proteins ADF family. Post-translationally, ISGylated. As to expression, widely expressed. Not found in skeletal muscle.

Functionally, actin-depolymerizing protein. Severs actin filaments (F-actin) and binds to actin monomers (G-actin). Acts in a pH-independent manner. The polypeptide is Destrin (Dstn) (Mus musculus (Mouse)).